We begin with the raw amino-acid sequence, 221 residues long: Putative N-acetylmannosamine-6-phosphate 2-epimerase (221 aa).

The protein belongs to the NanE family.

The catalysed reaction is an N-acyl-D-glucosamine 6-phosphate = an N-acyl-D-mannosamine 6-phosphate. The protein operates within amino-sugar metabolism; N-acetylneuraminate degradation; D-fructose 6-phosphate from N-acetylneuraminate: step 3/5. Its function is as follows. Converts N-acetylmannosamine-6-phosphate (ManNAc-6-P) to N-acetylglucosamine-6-phosphate (GlcNAc-6-P). The sequence is that of Putative N-acetylmannosamine-6-phosphate 2-epimerase from Clostridium perfringens (strain SM101 / Type A).